We begin with the raw amino-acid sequence, 65 residues long: Light-harvesting protein B800/830/1020 alpha-2 chain (65 aa).

Over 1 to 13 (MWKLWKFVDFRMT) the chain is Cytoplasmic. A helical transmembrane segment spans residues 14–34 (AVGFHIFFALIAFAVHFACIS). Residue histidine 29 coordinates a bacteriochlorophyll. Over 35–65 (SERFNWLEGAPAAEYYMDENPGIWKRTSYDG) the chain is Periplasmic.

It belongs to the antenna complex alpha subunit family. In terms of assembly, the core complex is formed by different alpha and beta chains, binding bacteriochlorophyll molecules, and arranged most probably in tetrameric structures disposed around the reaction center. The non-pigmented gamma chains may constitute additional components.

Its subcellular location is the cell inner membrane. Antenna complexes are light-harvesting systems, which transfer the excitation energy to the reaction centers. The polypeptide is Light-harvesting protein B800/830/1020 alpha-2 chain (Halorhodospira halochloris (Ectothiorhodospira halochloris)).